Consider the following 436-residue polypeptide: MGKRLDQPQMYPQYTYYYPHYLQTKSYAPAPHPMAPPSPSTNSSSNNSSNNSSGEQLSKTNLYIRGLPPGTTDQDLIKLCQPYGKIVSTKAILDKNTNQCKGYGFVDFDSPAAAQKAVASLKANGVQAQMAKQQEQDPTNLYISNLPISMDEQELENMLKPFGHVISTRILRDANGVSRGVGFARMESTEKCEVVIQHFNGKYLKTPPGIPAPSEPLLCKFADGGQKKRQNQSKYTQNGRPWPREGEAGMALTYDPTAAIQNGFYSSPYSIATNRMIPQTSITPFIAASPVSTYQVQSTSWMPHPPYVMQPTGAVITPTMDHPMSMQPANMMGPLTQQMNHLSLGTTGTIQSQDRIMILHQLLCQYMTAAAPMQGTYIPQYTPVPPTAVSIEGVVADTSPQTVAPSSQDTSGQQQQIAVDTSNEHAPAYSYQQSKP.

The disordered stretch occupies residues alanine 28–glutamine 56. Residues alanine 30 to proline 39 are compositionally biased toward pro residues. Low complexity predominate over residues serine 40 to serine 53. 2 RRM domains span residues threonine 60 to glutamine 133 and threonine 139 to glycine 224. Residues threonine 398–threonine 421 show a composition bias toward polar residues. The disordered stretch occupies residues threonine 398–proline 436.

The protein localises to the cytoplasm. In terms of biological role, binds poly(A) and poly(U) oligoribonucleotides. This Pongo abelii (Sumatran orangutan) protein is RNA-binding motif, single-stranded-interacting protein 3 (RBMS3).